Consider the following 239-residue polypeptide: mRNA turnover protein 4 homolog (239 aa).

Residues 216-239 (QQMDDDLPESAPESEGESEEEDDS) form a disordered region. Over residues 218-239 (MDDDLPESAPESEGESEEEDDS) the composition is skewed to acidic residues. 3 positions are modified to phosphoserine: Ser225, Ser229, and Ser233.

It belongs to the universal ribosomal protein uL10 family. Associates with the pre-60S ribosomal particle. Interacts with MINAS-60 (product of an alternative open reading frame of RBM10).

It localises to the nucleus. The protein localises to the nucleolus. The protein resides in the cytoplasm. Functionally, component of the ribosome assembly machinery. Nuclear paralog of the ribosomal protein P0, it binds pre-60S subunits at an early stage of assembly in the nucleolus, and is replaced by P0 in cytoplasmic pre-60S subunits and mature 80S ribosomes. The polypeptide is mRNA turnover protein 4 homolog (Mrto4) (Mus musculus (Mouse)).